The following is a 214-amino-acid chain: GTP cyclohydrolase 1 (214 aa).

Positions 108, 111, and 179 each coordinate Zn(2+).

It belongs to the GTP cyclohydrolase I family. Toroid-shaped homodecamer, composed of two pentamers of five dimers.

The catalysed reaction is GTP + H2O = 7,8-dihydroneopterin 3'-triphosphate + formate + H(+). It functions in the pathway cofactor biosynthesis; 7,8-dihydroneopterin triphosphate biosynthesis; 7,8-dihydroneopterin triphosphate from GTP: step 1/1. The chain is GTP cyclohydrolase 1 from Shewanella putrefaciens (strain CN-32 / ATCC BAA-453).